Reading from the N-terminus, the 729-residue chain is Sodium-dependent neutral amino acid transporter B(0)AT2 (729 aa).

The Cytoplasmic segment spans residues 1–69 (MPKNSKVVKR…ARPAWNSKLQ (69 aa)). A phosphoserine mark is found at S25 and S55. The next 3 helical transmembrane spans lie at 70–90 (YILA…FPYL), 98–117 (AYLL…LFFL), and 142–162 (GIGF…NVII). The Extracellular segment spans residues 163–225 (GWSLFYFSQS…TSISESGGLN (63 aa)). N187 and N213 each carry an N-linked (GlcNAc...) asparagine glycan. 4 consecutive transmembrane segments (helical) span residues 226 to 244 (WKMT…LAMI), 253 to 270 (IMYF…CFLI), 306 to 323 (VFFA…FSSY), and 335 to 356 (VLVS…FAVL). Over 357–452 (GFKANVINEK…FIAFTEAMTH (96 aa)) the chain is Extracellular. N-linked (GlcNAc...) asparagine glycans are attached at residues N383 and N394. Helical transmembrane passes span 453–472 (FPAS…NLGL), 496–514 (ILTV…IFVQ), 530–550 (TLPL…VYGI), 571–592 (YMWK…IVNM), and 620–642 (VICI…IRRC). The Cytoplasmic portion of the chain corresponds to 643–729 (NLIDDSSGNL…DMPDMPESDL (87 aa)). Phosphoserine is present on residues S687, S699, and S701.

This sequence belongs to the sodium:neurotransmitter symporter (SNF) (TC 2.A.22) family. SLC6A15 subfamily.

The protein resides in the membrane. The catalysed reaction is L-leucine(in) + Na(+)(in) = L-leucine(out) + Na(+)(out). The enzyme catalyses L-isoleucine(in) + Na(+)(in) = L-isoleucine(out) + Na(+)(out). It catalyses the reaction L-methionine(in) + Na(+)(in) = L-methionine(out) + Na(+)(out). It carries out the reaction L-proline(in) + Na(+)(in) = L-proline(out) + Na(+)(out). The catalysed reaction is L-alanine(in) + Na(+)(in) = L-alanine(out) + Na(+)(out). The enzyme catalyses L-asparagine(in) + Na(+)(in) = L-asparagine(out) + Na(+)(out). It catalyses the reaction L-valine(in) + Na(+)(in) = L-valine(out) + Na(+)(out). It carries out the reaction L-cysteine(in) + Na(+)(in) = L-cysteine(out) + Na(+)(out). The catalysed reaction is L-glutamine(in) + Na(+)(in) = L-glutamine(out) + Na(+)(out). The enzyme catalyses L-serine(in) + Na(+)(in) = L-serine(out) + Na(+)(out). It catalyses the reaction L-threonine(in) + Na(+)(in) = L-threonine(out) + Na(+)(out). It carries out the reaction L-pipecolate(in) + Na(+)(in) = L-pipecolate(out) + Na(+)(out). The catalysed reaction is L-phenylalanine(in) + Na(+)(in) = L-phenylalanine(out) + Na(+)(out). Its function is as follows. Functions as a sodium-dependent neutral amino acid transporter. Exhibits preference for the branched-chain amino acids, particularly leucine, valine and isoleucine and methionine. Can also transport low-affinity substrates such as alanine, phenylalanine, glutamine and pipecolic acid. Mediates the saturable, pH-sensitive and electrogenic cotransport of proline and sodium ions with a stoichiometry of 1:1. May have a role as transporter for neurotransmitter precursors into neurons. In contrast to other members of the neurotransmitter transporter family, does not appear to be chloride-dependent. This is Sodium-dependent neutral amino acid transporter B(0)AT2 (SLC6A15) from Bos taurus (Bovine).